Here is a 92-residue protein sequence, read N- to C-terminus: UPF0223 protein SSA_0938 (92 aa).

It belongs to the UPF0223 family.

The chain is UPF0223 protein SSA_0938 from Streptococcus sanguinis (strain SK36).